We begin with the raw amino-acid sequence, 249 residues long: Ribonuclease HII (249 aa).

The span at 1–19 (MAPRPKAPPQPAEPDPALP) shows a compositional bias: pro residues. The interval 1–31 (MAPRPKAPPQPAEPDPALPRPRGRPPKAGAV) is disordered. Residues 52–240 (APVAGADEVG…VREQQLGLFP (189 aa)) form the RNase H type-2 domain. A divalent metal cation-binding residues include Asp-58, Glu-59, and Asp-149.

This sequence belongs to the RNase HII family. Mn(2+) serves as cofactor. The cofactor is Mg(2+).

It localises to the cytoplasm. It carries out the reaction Endonucleolytic cleavage to 5'-phosphomonoester.. Its function is as follows. Endonuclease that specifically degrades the RNA of RNA-DNA hybrids. This chain is Ribonuclease HII, found in Xanthobacter autotrophicus (strain ATCC BAA-1158 / Py2).